The chain runs to 181 residues: Putative D-tyrosyl-tRNA(Tyr) deacylase 2 (181 aa).

The protein belongs to the DTD family. Highly divergent. Homodimer.

The protein localises to the cytoplasm. May hydrolyze D-tyrosyl-tRNA(Tyr) into D-tyrosine and free tRNA(Tyr). Could be a defense mechanism against a harmful effect of D-tyrosine. The protein is Putative D-tyrosyl-tRNA(Tyr) deacylase 2 of Leishmania major.